We begin with the raw amino-acid sequence, 441 residues long: MSHEEDLIDYSDEELQTTDAAATTAAPAANGAQDKKGDLTVSGGRPDKKGSYVGIHSTGFRDFLLKGELLRAITDCGFEHPSEVQQVCIPTAILNVDVLCQAKSGLGKTAVFVLTTLHQLEPVPGECSVLVMCHTRELAYQIKNEYARFSKYLPDVKTAVFYGGTPIQKDIEVLSNKESYPNIVVGTPGRLNALVREKKLSLRNVKAFVLDECDKMLDQIDMRRDVQEIFRATPADKQVMMFSATLSQEIRPICKKFMRNPLEVYVDDDTKLTLHGLQQYYIKLSESEKNRKLNELLDSLEFNQVIIFVKSTLRANELDKLLRECNFPSIAVHSGVSQEERIKRYKEFKEFNKRICVATDVFGRGIDIERINLAINYDLPADADSYLHRVGRAGRFGTKGLSISFVSSEEDEKVLKEIEKRFEVALPEYPEGGVDSSTYMA.

Positions 19 to 29 (DAAATTAAPAA) are enriched in low complexity. The tract at residues 19–43 (DAAATTAAPAANGAQDKKGDLTVSG) is disordered. The Q motif signature appears at 58–86 (TGFRDFLLKGELLRAITDCGFEHPSEVQQ). The region spanning 89-264 (IPTAILNVDV…KKFMRNPLEV (176 aa)) is the Helicase ATP-binding domain. ATP is bound at residue 102–109 (AKSGLGKT). A DEAD box motif is present at residues 211-214 (DECD). In terms of domain architecture, Helicase C-terminal spans 276 to 437 (GLQQYYIKLS…EYPEGGVDSS (162 aa)).

Belongs to the DEAD box helicase family. DECD subfamily.

The protein resides in the nucleus. It carries out the reaction ATP + H2O = ADP + phosphate + H(+). Functionally, ATP-binding RNA helicase involved in transcription elongation and required for the export of mRNA out of the nucleus. SUB2 also plays a role in pre-mRNA splicing and spliceosome assembly. May be involved in rDNA and telomeric silencing, and maintenance of genome integrity. The chain is ATP-dependent RNA helicase sub2 (sub2) from Neosartorya fischeri (strain ATCC 1020 / DSM 3700 / CBS 544.65 / FGSC A1164 / JCM 1740 / NRRL 181 / WB 181) (Aspergillus fischerianus).